The following is a 546-amino-acid chain: Probable protein kinase UbiB (546 aa).

The Protein kinase domain occupies Asp124 to Leu502. ATP is bound by residues Leu130 to Val138 and Lys153. Asp288 functions as the Proton acceptor in the catalytic mechanism. 2 helical membrane-spanning segments follow: residues Ser499–Ser519 and Val521–Gly541.

It belongs to the ABC1 family. UbiB subfamily.

It is found in the cell inner membrane. Its pathway is cofactor biosynthesis; ubiquinone biosynthesis [regulation]. Its function is as follows. Is probably a protein kinase regulator of UbiI activity which is involved in aerobic coenzyme Q (ubiquinone) biosynthesis. In Pectobacterium carotovorum subsp. carotovorum (strain PC1), this protein is Probable protein kinase UbiB.